A 138-amino-acid polypeptide reads, in one-letter code: Large ribosomal subunit protein bL19 (138 aa).

It belongs to the bacterial ribosomal protein bL19 family.

Its function is as follows. This protein is located at the 30S-50S ribosomal subunit interface and may play a role in the structure and function of the aminoacyl-tRNA binding site. This Rickettsia felis (strain ATCC VR-1525 / URRWXCal2) (Rickettsia azadi) protein is Large ribosomal subunit protein bL19.